Reading from the N-terminus, the 601-residue chain is Aspartate--tRNA(Asp/Asn) ligase (601 aa).

E177 is a binding site for L-aspartate. An aspartate region spans residues 201-204 (QLFK). An L-aspartate-binding site is contributed by R223. Residues 223–225 (RDE) and Q232 each bind ATP. H455 contacts L-aspartate. ATP is bound at residue E489. R496 lines the L-aspartate pocket. 541-544 (GWDR) contributes to the ATP binding site. Residues 568 to 601 (VDPLTDAPAPIPLEQRRETGVDFKPKKKTDESAV) are disordered. Basic and acidic residues predominate over residues 581–601 (EQRRETGVDFKPKKKTDESAV).

This sequence belongs to the class-II aminoacyl-tRNA synthetase family. Type 1 subfamily. As to quaternary structure, homodimer.

It is found in the cytoplasm. The enzyme catalyses tRNA(Asx) + L-aspartate + ATP = L-aspartyl-tRNA(Asx) + AMP + diphosphate. Its function is as follows. Aspartyl-tRNA synthetase with relaxed tRNA specificity since it is able to aspartylate not only its cognate tRNA(Asp) but also tRNA(Asn). Reaction proceeds in two steps: L-aspartate is first activated by ATP to form Asp-AMP and then transferred to the acceptor end of tRNA(Asp/Asn). This Corynebacterium diphtheriae (strain ATCC 700971 / NCTC 13129 / Biotype gravis) protein is Aspartate--tRNA(Asp/Asn) ligase.